The following is a 307-amino-acid chain: Porphobilinogen deaminase (307 aa).

Cysteine 241 is modified (S-(dipyrrolylmethanemethyl)cysteine).

It belongs to the HMBS family. Monomer. Dipyrromethane is required as a cofactor.

It catalyses the reaction 4 porphobilinogen + H2O = hydroxymethylbilane + 4 NH4(+). Its pathway is porphyrin-containing compound metabolism; protoporphyrin-IX biosynthesis; coproporphyrinogen-III from 5-aminolevulinate: step 2/4. Tetrapolymerization of the monopyrrole PBG into the hydroxymethylbilane pre-uroporphyrinogen in several discrete steps. The polypeptide is Porphobilinogen deaminase (Coxiella burnetii (strain CbuK_Q154) (Coxiella burnetii (strain Q154))).